Consider the following 691-residue polypeptide: Lectin-domain containing receptor kinase VI.4 (691 aa).

An N-terminal signal peptide occupies residues 1–19 (MGRAKSMVSLLLVLFLVRA). Residues 20 to 306 (HVATTETTTE…AKKRGYNGKV (287 aa)) are Extracellular-facing. The legume-lectin like stretch occupies residues 26–273 (TTTEFIFHGF…AHYVMGWSFA (248 aa)). The helical transmembrane segment at 307 to 327 (IALIVALSTVISIMLVLLFLF) threads the bilayer. Residues 328–691 (MMYKKRMQQE…ISSTSLISGR (364 aa)) lie on the Cytoplasmic side of the membrane. Residues 363–641 (FKENRVVGTG…LNRDEDVPEI (279 aa)) form the Protein kinase domain. ATP is bound by residues 369–377 (VGTGGFGIV) and Lys-392. Asp-491 functions as the Proton acceptor in the catalytic mechanism.

In the C-terminal section; belongs to the protein kinase superfamily. Ser/Thr protein kinase family. The protein in the N-terminal section; belongs to the leguminous lectin family.

It is found in the cell membrane. It catalyses the reaction L-seryl-[protein] + ATP = O-phospho-L-seryl-[protein] + ADP + H(+). The catalysed reaction is L-threonyl-[protein] + ATP = O-phospho-L-threonyl-[protein] + ADP + H(+). Its function is as follows. Involved in negative regulation of abscisic acid response in seed germination. The sequence is that of Lectin-domain containing receptor kinase VI.4 (LECRK64) from Arabidopsis thaliana (Mouse-ear cress).